Consider the following 280-residue polypeptide: MKFGKSLSSQIVEMQPEWRDNFLSYKDLKKRLNLISGGAAGERASKRRRVGGATAVTVTAAAAGGMTLEQAGFVGLLDAELDKFNFFFLEKEEEYVIKQKELRERKMASAEEVMRVRKEIVDLHGEMVLLENYSALNYTGLVKILKKYDKRTGSMIRLPFVQKVLQQPFFTTDLLYKLVKECEEMLDQLMPTNEHSVASEDGKDDSEGEEKGSKPSSSSSANGGAVPGEAEAEDERSTDMKSTVTAALRALREIRSGSSTVSVFSLPPLHGSNGQDEPGR.

The region spanning Met-1–Gln-162 is the SPX domain. Disordered regions lie at residues Pro-191–Val-244 and Gly-257–Arg-280.

As to quaternary structure, interacts (via SPX domain) with PHR2 (via C-terminus). Interacts with RLI1 in the nucleus to prevents its positive regulation of leaf inclination during phosphate (Pi) starvation. In terms of tissue distribution, predominantly expressed in roots, leaves and seeds. Localized in leaves lamina joints.

It is found in the nucleus. Functionally, inhibits PHR2 DNA-binding activity via a phosphate (Pi)-dependent protein interaction. Together with SPX1, plays a negative role in the regulation of leaf inclination by preventing RLI1 transcription factor activity in Pi depleted conditions. This Oryza sativa subsp. japonica (Rice) protein is SPX domain-containing protein 2.